The sequence spans 305 residues: MSSLVTPINLDKINHSQSTVKDYILLMKPRVMSLVIFTGFVGIWLAPYSVHPFIAGIAVVCIALGAGSAGAINMWYDRDIDSLMKRTQKRPIVRGAIEPDEALSFGLITGFFAVFFMALCVNLLASFLLLFTIFYYICIYTIWLKRRSIQNIVIGGVSGALPPVIGYAAVSNTISLESIILFLIIFIWTPPHSWALALFCNDDYKNCKVPMMPAVKGNLYTKKQILIYSILLFIVSLMPFFIGMNNFIYLITSGILGLVFLYYSGSLFYDTPDNKQAKRFFAYSIFYLFFIFLLLSSTSTISLIS.

Transmembrane regions (helical) follow at residues 31–51 (VMSL…YSVH), 52–72 (PFIA…AGAI), 102–119 (ALSF…FMAL), 123–145 (LLAS…IWLK), 151–171 (NIVI…AAVS), 179–199 (IILF…LALF), 225–245 (ILIY…IGMN), 247–267 (FIYL…SGSL), and 284–304 (SIFY…ISLI).

It belongs to the UbiA prenyltransferase family. Protoheme IX farnesyltransferase subfamily.

Its subcellular location is the cell inner membrane. The catalysed reaction is heme b + (2E,6E)-farnesyl diphosphate + H2O = Fe(II)-heme o + diphosphate. It functions in the pathway porphyrin-containing compound metabolism; heme O biosynthesis; heme O from protoheme: step 1/1. Its function is as follows. Converts heme B (protoheme IX) to heme O by substitution of the vinyl group on carbon 2 of heme B porphyrin ring with a hydroxyethyl farnesyl side group. The protein is Protoheme IX farnesyltransferase of Rickettsia felis (strain ATCC VR-1525 / URRWXCal2) (Rickettsia azadi).